A 101-amino-acid polypeptide reads, in one-letter code: Large ribosomal subunit protein uL23 (101 aa).

It belongs to the universal ribosomal protein uL23 family. In terms of assembly, part of the 50S ribosomal subunit. Contacts protein L29, and trigger factor when it is bound to the ribosome.

One of the early assembly proteins it binds 23S rRNA. One of the proteins that surrounds the polypeptide exit tunnel on the outside of the ribosome. Forms the main docking site for trigger factor binding to the ribosome. This chain is Large ribosomal subunit protein uL23, found in Corynebacterium kroppenstedtii (strain DSM 44385 / JCM 11950 / CIP 105744 / CCUG 35717).